A 364-amino-acid polypeptide reads, in one-letter code: tRNA 2-selenouridine synthase (364 aa).

A Rhodanese domain is found at 14 to 137 (LLADTPLIDV…LRQTAIQATW (124 aa)). Cys97 serves as the catalytic S-selanylcysteine intermediate.

This sequence belongs to the SelU family. In terms of assembly, monomer.

It carries out the reaction 5-methylaminomethyl-2-thiouridine(34) in tRNA + selenophosphate + (2E)-geranyl diphosphate + H2O + H(+) = 5-methylaminomethyl-2-selenouridine(34) in tRNA + (2E)-thiogeraniol + phosphate + diphosphate. The catalysed reaction is 5-methylaminomethyl-2-thiouridine(34) in tRNA + (2E)-geranyl diphosphate = 5-methylaminomethyl-S-(2E)-geranyl-thiouridine(34) in tRNA + diphosphate. It catalyses the reaction 5-methylaminomethyl-S-(2E)-geranyl-thiouridine(34) in tRNA + selenophosphate + H(+) = 5-methylaminomethyl-2-(Se-phospho)selenouridine(34) in tRNA + (2E)-thiogeraniol. The enzyme catalyses 5-methylaminomethyl-2-(Se-phospho)selenouridine(34) in tRNA + H2O = 5-methylaminomethyl-2-selenouridine(34) in tRNA + phosphate. Involved in the post-transcriptional modification of the uridine at the wobble position (U34) of tRNA(Lys), tRNA(Glu) and tRNA(Gln). Catalyzes the conversion of 2-thiouridine (S2U-RNA) to 2-selenouridine (Se2U-RNA). Acts in a two-step process involving geranylation of 2-thiouridine (S2U) to S-geranyl-2-thiouridine (geS2U) and subsequent selenation of the latter derivative to 2-selenouridine (Se2U) in the tRNA chain. This chain is tRNA 2-selenouridine synthase, found in Salmonella choleraesuis (strain SC-B67).